Reading from the N-terminus, the 118-residue chain is Small ribosomal subunit protein uS13 (118 aa).

A disordered region spans residues 92 to 118; it reads RRGLPVRGQRTKTNARTRKGPRKPIKK.

Belongs to the universal ribosomal protein uS13 family. Part of the 30S ribosomal subunit. Forms a loose heterodimer with protein S19. Forms two bridges to the 50S subunit in the 70S ribosome.

Functionally, located at the top of the head of the 30S subunit, it contacts several helices of the 16S rRNA. In the 70S ribosome it contacts the 23S rRNA (bridge B1a) and protein L5 of the 50S subunit (bridge B1b), connecting the 2 subunits; these bridges are implicated in subunit movement. Contacts the tRNAs in the A and P-sites. This chain is Small ribosomal subunit protein uS13, found in Pectobacterium carotovorum subsp. carotovorum (strain PC1).